We begin with the raw amino-acid sequence, 341 residues long: Anthranilate phosphoribosyltransferase (341 aa).

Residues Gly79, 82–83, Thr87, 89–92, 107–115, and Ala119 contribute to the 5-phospho-alpha-D-ribose 1-diphosphate site; these read GD, NIST, and KHGNRAASS. Gly79 provides a ligand contact to anthranilate. Ser91 contributes to the Mg(2+) binding site. Asn110 is a binding site for anthranilate. Residue Arg165 coordinates anthranilate. Residues Asp224 and Glu225 each contribute to the Mg(2+) site.

The protein belongs to the anthranilate phosphoribosyltransferase family. As to quaternary structure, homodimer. It depends on Mg(2+) as a cofactor.

It catalyses the reaction N-(5-phospho-beta-D-ribosyl)anthranilate + diphosphate = 5-phospho-alpha-D-ribose 1-diphosphate + anthranilate. The protein operates within amino-acid biosynthesis; L-tryptophan biosynthesis; L-tryptophan from chorismate: step 2/5. Functionally, catalyzes the transfer of the phosphoribosyl group of 5-phosphorylribose-1-pyrophosphate (PRPP) to anthranilate to yield N-(5'-phosphoribosyl)-anthranilate (PRA). The chain is Anthranilate phosphoribosyltransferase from Lacticaseibacillus casei (strain BL23) (Lactobacillus casei).